A 545-amino-acid chain; its full sequence is Bifunctional purine biosynthesis protein PurH (545 aa).

An MGS-like domain is found at 1–150 (MTNTNRPIRR…KNHATVAIVT (150 aa)).

It belongs to the PurH family.

The catalysed reaction is (6R)-10-formyltetrahydrofolate + 5-amino-1-(5-phospho-beta-D-ribosyl)imidazole-4-carboxamide = 5-formamido-1-(5-phospho-D-ribosyl)imidazole-4-carboxamide + (6S)-5,6,7,8-tetrahydrofolate. The enzyme catalyses IMP + H2O = 5-formamido-1-(5-phospho-D-ribosyl)imidazole-4-carboxamide. Its pathway is purine metabolism; IMP biosynthesis via de novo pathway; 5-formamido-1-(5-phospho-D-ribosyl)imidazole-4-carboxamide from 5-amino-1-(5-phospho-D-ribosyl)imidazole-4-carboxamide (10-formyl THF route): step 1/1. The protein operates within purine metabolism; IMP biosynthesis via de novo pathway; IMP from 5-formamido-1-(5-phospho-D-ribosyl)imidazole-4-carboxamide: step 1/1. The protein is Bifunctional purine biosynthesis protein PurH of Bifidobacterium longum (strain NCC 2705).